The sequence spans 699 residues: Elongation factor G (699 aa).

Residues 10-292 (DRTRNIGIMA…AVIDYLPSPT (283 aa)) form the tr-type G domain. GTP is bound by residues 19-26 (AHIDAGKT), 90-94 (DTPGH), and 144-147 (NKMD).

It belongs to the TRAFAC class translation factor GTPase superfamily. Classic translation factor GTPase family. EF-G/EF-2 subfamily.

Its subcellular location is the cytoplasm. In terms of biological role, catalyzes the GTP-dependent ribosomal translocation step during translation elongation. During this step, the ribosome changes from the pre-translocational (PRE) to the post-translocational (POST) state as the newly formed A-site-bound peptidyl-tRNA and P-site-bound deacylated tRNA move to the P and E sites, respectively. Catalyzes the coordinated movement of the two tRNA molecules, the mRNA and conformational changes in the ribosome. The sequence is that of Elongation factor G from Coxiella burnetii (strain Dugway 5J108-111).